Consider the following 957-residue polypeptide: SH3 domain-binding protein 4 (957 aa).

An SH3 1 domain is found at 54 to 113; the sequence is DNVKEVVAIKDYCPNNFTTLKFSKGEHLYVLDTSGGEWWYAHNTTEMGYIPSSYVQPLNY. A ZU5 domain is found at 312 to 449; the sequence is TSIVCRLDSS…LEPVMYVVMV (138 aa). The SH3 2 domain occupies 649 to 719; sequence TSLKYGKLLK…HAKNVLVVGK (71 aa).

As to quaternary structure, homodimer or homooligomer.

The protein localises to the membrane. It localises to the clathrin-coated pit. Its subcellular location is the cytoplasmic vesicle. It is found in the clathrin-coated vesicle. The protein resides in the nucleus. Possible role in regulating endocytosis of the transferrin receptor at the plasma membrane. Alternatively, may function as a negative regulator of the amino acid-induced TOR signaling by inhibiting the formation of active Rag GTPase complexes. Preferentially binds inactive Rag GTPase complexes and prevents their interaction with the mTORC1 complex inhibiting its relocalization to lysosomes and its activation. Thereby, may indirectly regulate cell growth, proliferation and autophagy. This is SH3 domain-binding protein 4 (sh3bp4) from Xenopus tropicalis (Western clawed frog).